The sequence spans 345 residues: Methylthioribose-1-phosphate isomerase (345 aa).

Residues 47–49 (RGA), Arg-90, and Gln-199 each bind substrate. Asp-240 acts as the Proton donor in catalysis. 250-251 (NK) is a substrate binding site.

This sequence belongs to the eIF-2B alpha/beta/delta subunits family. MtnA subfamily.

It catalyses the reaction 5-(methylsulfanyl)-alpha-D-ribose 1-phosphate = 5-(methylsulfanyl)-D-ribulose 1-phosphate. The protein operates within amino-acid biosynthesis; L-methionine biosynthesis via salvage pathway; L-methionine from S-methyl-5-thio-alpha-D-ribose 1-phosphate: step 1/6. Its function is as follows. Catalyzes the interconversion of methylthioribose-1-phosphate (MTR-1-P) into methylthioribulose-1-phosphate (MTRu-1-P). The polypeptide is Methylthioribose-1-phosphate isomerase (Crocosphaera subtropica (strain ATCC 51142 / BH68) (Cyanothece sp. (strain ATCC 51142))).